Reading from the N-terminus, the 338-residue chain is MLGINYKPCNEDFWQGRTDSEENFLAFRWHQWIKPINLNKDDLSPFTGKLGFAFIGFCCDEGIRRNKGRTGAAKGPETIREEMANLPCCFTDEVKLFDAGNILVENISLEEGQDLLSKAINKILSLNLFPIVLGGGHEVAFGNYLGVLSHLKTINSKPNIGIINFDAHLDIRPYTEGMGSSGTMFRQISDICKKEDLNYSYLCMGVQKHSNTLELFKTADKLGANYVFAKNITYGDNWIVFESLDDFMKAQDYIYVTVCSDVFSSAFAPGVSASQSLGLDPEIVVRFIKYILRSNKVISFDIAEVSPRFDQGHVTANLAAVVIFSVIDTIAKIYGLGL.

The Mn(2+) site is built by His137, Asp166, His168, Asp170, Cys259, and Asp261.

Belongs to the arginase family. It depends on Mn(2+) as a cofactor.

It carries out the reaction N-formimidoyl-L-glutamate + H2O = formamide + L-glutamate. The protein operates within amino-acid degradation; L-histidine degradation into L-glutamate; L-glutamate from N-formimidoyl-L-glutamate (hydrolase route): step 1/1. Its function is as follows. Catalyzes the conversion of N-formimidoyl-L-glutamate to L-glutamate and formamide. The chain is Formimidoylglutamase from Clostridium tetani (strain Massachusetts / E88).